The sequence spans 311 residues: tRNA-cytidine(32) 2-sulfurtransferase (311 aa).

The short motif at 47 to 52 is the PP-loop motif element; it reads SGGKDS. Residues Cys-122, Cys-125, and Cys-213 each coordinate [4Fe-4S] cluster.

It belongs to the TtcA family. In terms of assembly, homodimer. It depends on Mg(2+) as a cofactor. Requires [4Fe-4S] cluster as cofactor.

It is found in the cytoplasm. The catalysed reaction is cytidine(32) in tRNA + S-sulfanyl-L-cysteinyl-[cysteine desulfurase] + AH2 + ATP = 2-thiocytidine(32) in tRNA + L-cysteinyl-[cysteine desulfurase] + A + AMP + diphosphate + H(+). The protein operates within tRNA modification. Functionally, catalyzes the ATP-dependent 2-thiolation of cytidine in position 32 of tRNA, to form 2-thiocytidine (s(2)C32). The sulfur atoms are provided by the cysteine/cysteine desulfurase (IscS) system. The polypeptide is tRNA-cytidine(32) 2-sulfurtransferase (Salmonella typhi).